The sequence spans 673 residues: MVLPKPEMPFFVLLLFLGLGCLRPAAATDERFVFNGFTGANLSFDGMATVTSNGLLMLTNGTNQLKGHAFFPSPLQFQRGPNSTAMQSFSTAFVIGIIGAFEDLSSHGMAFIIAKSKNLTSALPGQFMGLVNSANNGNATNHLFAVEFDTILNSEFNDMSGNHVGIDVNGLNSVDADNAGYYDDGTGDFKNMSLVSRRPMQVWVDFDGQTMQVNVTMAPLEVARPKKPLLSKIVNISSVIDDTAYVGFSSATGILFCRHYVLGWSFKMNGAAPALNISSLPSLPVTFPKPRSKTLEIVLPIASAVLVFAVAAAVFVFMRRRRMFSELKEEWEVTFGPHRFSYKDLFHATDGFSDKRLLGIGGFGRVYRGVLPSSKAEVAVKKVAHGSRQGMREFVAEVVSIGRLRHRNLVQLLGYCRRKGELLLVYDYMPNGSLDKQLYDQGKITLRWAQRFRIIRGVASGLLYLHEDWEQVVVHRDIKASNVLLDADMNGRLGDFGLARLYDHGTDPHTTHVVGTMGYLAPELGHTGKASKASDVFAFGAFMLEVACGRKPVAQDARDNRVVLVDWVLDRWRAGAITDTVDPRLHGDFVESEASLVLRLGLLCSHPLPGARPGTRQLVQYLEGDVPLPELSPTYQSFNMLALMQDQGFDPYVMSYPMTSTSAGTFSDLSGGR.

A signal peptide spans 1 to 27 (MVLPKPEMPFFVLLLFLGLGCLRPAAA). The Extracellular portion of the chain corresponds to 28–296 (TDERFVFNGF…FPKPRSKTLE (269 aa)). The tract at residues 32-270 (FVFNGFTGAN…VLGWSFKMNG (239 aa)) is legume-lectin like. Residues asparagine 41, asparagine 60, asparagine 82, asparagine 118, asparagine 138, asparagine 191, asparagine 214, asparagine 235, and asparagine 276 are each glycosylated (N-linked (GlcNAc...) asparagine). A helical membrane pass occupies residues 297–317 (IVLPIASAVLVFAVAAAVFVF). At 318-673 (MRRRRMFSEL…GTFSDLSGGR (356 aa)) the chain is on the cytoplasmic side. Residues 352–631 (FSDKRLLGIG…LEGDVPLPEL (280 aa)) enclose the Protein kinase domain. Residues 358 to 366 (LGIGGFGRV) and lysine 381 each bind ATP. Aspartate 477 (proton acceptor) is an active-site residue.

The protein in the C-terminal section; belongs to the protein kinase superfamily. Ser/Thr protein kinase family. It in the N-terminal section; belongs to the leguminous lectin family. As to expression, mainly expressed in root epidermal cells.

The protein resides in the cell membrane. It catalyses the reaction L-seryl-[protein] + ATP = O-phospho-L-seryl-[protein] + ADP + H(+). The enzyme catalyses L-threonyl-[protein] + ATP = O-phospho-L-threonyl-[protein] + ADP + H(+). Its function is as follows. Lectin-domain containing receptor kinase involved in salt stress response. Acts as a negative regulator of salt tolerance. The polypeptide is L-type lectin-domain containing receptor kinase SIT2 (Oryza sativa subsp. japonica (Rice)).